We begin with the raw amino-acid sequence, 301 residues long: Sulfate adenylyltransferase subunit 2 (301 aa).

The segment at 279 to 301 (RQGRMIDHDSSGSMEEKKKQGYF) is disordered.

The protein belongs to the PAPS reductase family. CysD subfamily. In terms of assembly, heterodimer composed of CysD, the smaller subunit, and CysN.

It carries out the reaction sulfate + ATP + H(+) = adenosine 5'-phosphosulfate + diphosphate. It functions in the pathway sulfur metabolism; hydrogen sulfide biosynthesis; sulfite from sulfate: step 1/3. Its function is as follows. With CysN forms the ATP sulfurylase (ATPS) that catalyzes the adenylation of sulfate producing adenosine 5'-phosphosulfate (APS) and diphosphate, the first enzymatic step in sulfur assimilation pathway. APS synthesis involves the formation of a high-energy phosphoric-sulfuric acid anhydride bond driven by GTP hydrolysis by CysN coupled to ATP hydrolysis by CysD. The protein is Sulfate adenylyltransferase subunit 2 of Marinomonas sp. (strain MWYL1).